Here is a 553-residue protein sequence, read N- to C-terminus: Dihydrolipoyllysine-residue acetyltransferase component of pyruvate dehydrogenase complex (553 aa).

In terms of domain architecture, Lipoyl-binding 1 spans 2-77 (AFSVQMPALG…EVGGELAVIG (76 aa)). The residue at position 43 (K43) is an N6-lipoyllysine. A disordered region spans residues 81 to 125 (DAGEAAAPAPEKVPAAQPESKPAPEPPPVQPTSGAPAGGDAKPVL). A compositionally biased stretch (low complexity) spans 84 to 100 (EAAAPAPEKVPAAQPES). Residues 101–110 (KPAPEPPPVQ) are compositionally biased toward pro residues. One can recognise a Lipoyl-binding 2 domain in the interval 121–196 (AKPVLMPELG…PVGGELARIG (76 aa)). The residue at position 162 (K162) is an N6-lipoyllysine. Disordered stretches follow at residues 204-238 (APAPKPAPKPVPEPAPTPKAEPAPSPPAAQPAGAA) and 278-321 (AAAE…TQKA). The segment covering 206 to 232 (APKPAPKPVPEPAPTPKAEPAPSPPAA) has biased composition (pro residues). The Peripheral subunit-binding (PSBD) domain maps to 243–280 (YVTPLVRKLASENNIDLAGVTGTGVGGRIRKQDVLAAA). Residues 288 to 300 (APAPAAQAAAAPA) show a composition bias toward low complexity. Residues H523 and D527 contribute to the active site.

It belongs to the 2-oxoacid dehydrogenase family. Forms a 24-polypeptide structural core with octahedral symmetry. Part of the PDH complex, consisting of multiple copies of AceE (E1), DlaT (E2) and Lpd (E3). (R)-lipoate is required as a cofactor.

The catalysed reaction is N(6)-[(R)-dihydrolipoyl]-L-lysyl-[protein] + acetyl-CoA = N(6)-[(R)-S(8)-acetyldihydrolipoyl]-L-lysyl-[protein] + CoA. In terms of biological role, component of the pyruvate dehydrogenase (PDH) complex, that catalyzes the overall conversion of pyruvate to acetyl-CoA and CO(2). This is Dihydrolipoyllysine-residue acetyltransferase component of pyruvate dehydrogenase complex (dlaT) from Mycobacterium bovis (strain ATCC BAA-935 / AF2122/97).